The primary structure comprises 324 residues: Signal peptidase I (324 aa).

A Blocked amino end (Met) modification is found at Met-1. The Periplasmic segment spans residues 1-3 (MAN). The helical transmembrane segment at 4 to 22 (MFALILVIATLVTGILWCV) threads the bilayer. Residues 23 to 58 (DKFFFAPKRRERQAAAQAAAGDSLDKATLKKVAPKP) lie on the Cytoplasmic side of the membrane. The helical transmembrane segment at 59–77 (GWLETGASVFPVLAIVLIV) threads the bilayer. The Periplasmic portion of the chain corresponds to 78–324 (RSFIYEPFQI…LRLSRIGGIH (247 aa)). Catalysis depends on residues Ser-91 and Lys-146. Residues Cys-171 and Cys-177 are joined by a disulfide bond.

It belongs to the peptidase S26 family.

Its subcellular location is the cell inner membrane. The enzyme catalyses Cleavage of hydrophobic, N-terminal signal or leader sequences from secreted and periplasmic proteins.. This chain is Signal peptidase I (lepB), found in Escherichia coli (strain K12).